The following is a 1340-amino-acid chain: Iron-sulfur cluster assembly protein SufD (1340 aa).

Over residues 477-487 (NSLKHNNNNTK) the composition is skewed to low complexity. Disordered stretches follow at residues 477–498 (NSLK…ERSS), 723–743 (HGKD…NYLN), 765–794 (NVST…QSTV), 835–865 (EKNE…GEKK), and 992–1055 (NIPT…NNIQ). Residues 723-734 (HGKDNTQHDDKN) show a composition bias toward basic and acidic residues. Residues 782–794 (NPDTETNNEQSTV) show a composition bias toward polar residues. Over residues 1022 to 1037 (DNLLQNDQATNSNVEI) the composition is skewed to polar residues.

It belongs to the iron-sulfur cluster assembly SufBD family. As to quaternary structure, component of a complex composed of SufB, SufC and SufD in a stoichiometric ratio of 1:2:1. Interacts with SufB. Interacts with SufC; the interaction enhances the ATPase activity of SufC.

Its subcellular location is the plastid. The protein localises to the apicoplast. Its pathway is cofactor biosynthesis; iron-sulfur cluster biosynthesis. Participates in the sulfur mobilization (SUF) pathway for iron-sulfur (Fe-S) cluster biogenesis. As part of a complex consisting of SufB-SufC(2)-SufD, involved in assembly of [4Fe-4S] clusters. Enhances the ATPase activity of SufC. In Plasmodium berghei (strain Anka), this protein is Iron-sulfur cluster assembly protein SufD.